Here is a 224-residue protein sequence, read N- to C-terminus: Ribonuclease 3 (224 aa).

The RNase III domain maps to 4 to 127 (YSKLEKCLDY…IMGAIYLESG (124 aa)). Position 40 (Glu40) interacts with Mg(2+). Asp44 is a catalytic residue. Mg(2+)-binding residues include Asp113 and Glu116. The active site involves Glu116. The DRBM domain occupies 154 to 223 (DYKTALQEIT…AKIAIDKLKE (70 aa)).

The protein belongs to the ribonuclease III family. As to quaternary structure, homodimer. The cofactor is Mg(2+).

It is found in the cytoplasm. It carries out the reaction Endonucleolytic cleavage to 5'-phosphomonoester.. Functionally, digests double-stranded RNA. Involved in the processing of primary rRNA transcript to yield the immediate precursors to the large and small rRNAs (23S and 16S). Processes some mRNAs, and tRNAs when they are encoded in the rRNA operon. Processes pre-crRNA and tracrRNA of type II CRISPR loci if present in the organism. The chain is Ribonuclease 3 from Aliarcobacter butzleri (strain RM4018) (Arcobacter butzleri).